A 572-amino-acid polypeptide reads, in one-letter code: Urease subunit alpha (572 aa).

The region spanning 136 to 572 (GGIDTHIHWI…VPLAQRYFLF (437 aa)) is the Urease domain. Residues histidine 141, histidine 143, and lysine 224 each coordinate Ni(2+). The residue at position 224 (lysine 224) is an N6-carboxylysine. Histidine 226 contributes to the substrate binding site. Positions 253 and 279 each coordinate Ni(2+). The active-site Proton donor is the histidine 327. A Ni(2+)-binding site is contributed by aspartate 367.

It belongs to the metallo-dependent hydrolases superfamily. Urease alpha subunit family. As to quaternary structure, heterotrimer of UreA (gamma), UreB (beta) and UreC (alpha) subunits. Three heterotrimers associate to form the active enzyme. Ni cation serves as cofactor. In terms of processing, carboxylation allows a single lysine to coordinate two nickel ions.

It is found in the cytoplasm. The catalysed reaction is urea + 2 H2O + H(+) = hydrogencarbonate + 2 NH4(+). Its pathway is nitrogen metabolism; urea degradation; CO(2) and NH(3) from urea (urease route): step 1/1. This is Urease subunit alpha from Actinobacillus pleuropneumoniae serotype 7 (strain AP76).